The following is a 468-amino-acid chain: 3-isopropylmalate dehydratase large subunit (468 aa).

[4Fe-4S] cluster contacts are provided by cysteine 349, cysteine 409, and cysteine 412.

The protein belongs to the aconitase/IPM isomerase family. LeuC type 1 subfamily. In terms of assembly, heterodimer of LeuC and LeuD. [4Fe-4S] cluster is required as a cofactor.

The catalysed reaction is (2R,3S)-3-isopropylmalate = (2S)-2-isopropylmalate. Its pathway is amino-acid biosynthesis; L-leucine biosynthesis; L-leucine from 3-methyl-2-oxobutanoate: step 2/4. In terms of biological role, catalyzes the isomerization between 2-isopropylmalate and 3-isopropylmalate, via the formation of 2-isopropylmaleate. The chain is 3-isopropylmalate dehydratase large subunit from Nitrobacter winogradskyi (strain ATCC 25391 / DSM 10237 / CIP 104748 / NCIMB 11846 / Nb-255).